The primary structure comprises 216 residues: LexA repressor (216 aa).

The H-T-H motif DNA-binding region spans 29–49; sequence RAEIAQALGFRSPNAAEDHLK. Residues Ser-134 and Lys-171 each act as for autocatalytic cleavage activity in the active site.

The protein belongs to the peptidase S24 family. In terms of assembly, homodimer.

It carries out the reaction Hydrolysis of Ala-|-Gly bond in repressor LexA.. Represses a number of genes involved in the response to DNA damage (SOS response), including recA and lexA. In the presence of single-stranded DNA, RecA interacts with LexA causing an autocatalytic cleavage which disrupts the DNA-binding part of LexA, leading to derepression of the SOS regulon and eventually DNA repair. The chain is LexA repressor from Bordetella parapertussis (strain 12822 / ATCC BAA-587 / NCTC 13253).